Consider the following 717-residue polypeptide: Inhibitor of nuclear factor kappa-B kinase subunit epsilon (717 aa).

The Protein kinase domain maps to 9–315 (WHTDDLLGQG…LQRTVIHVFS (307 aa)). An ATP-binding site is contributed by 15-23 (LGQGATASV). A Glycyl lysine isopeptide (Lys-Gly) (interchain with G-Cter in ubiquitin) cross-link involves residue lysine 30. Residue lysine 38 coordinates ATP. Aspartate 135 acts as the Proton acceptor in catalysis. A Phosphoserine; by autocatalysis and IKKB modification is found at serine 172. Lysine 231 participates in a covalent cross-link: Glycyl lysine isopeptide (Lys-Gly) (interchain with G-Cter in SUMO1). Residues 385–650 (SSDTPKGLAF…AQESLNKIFD (266 aa)) are interaction with DDX3X. Lysine 403 participates in a covalent cross-link: Glycyl lysine isopeptide (Lys-Gly) (interchain with G-Cter in ubiquitin). Residues 452 to 473 (LQDTCQQTLEVTRTALLYLSSS) are leucine-zipper. The residue at position 503 (threonine 503) is a Phosphothreonine. Serine 665 is modified (phosphoserine).

It belongs to the protein kinase superfamily. Ser/Thr protein kinase family. I-kappa-B kinase subfamily. As to quaternary structure, homodimer. Interacts with MAVS/IPS1. Interacts (via protein kinase domain) with TTLL12 (via N-terminus); the interaction prevents MAVS binding to IKBKE. Interacts with the adapter proteins AZI2/NAP1, TANK and TBKBP1/SINTBAD. Interacts with SIKE1. Interacts with TICAM1/TRIF, IRF3 and RIGI; interactions are disrupted by the interaction between IKBKE and SIKE1. Interacts with TOPORS; induced by DNA damage. Interacts with CYLD, IKBKB, IKBKG and MYD88. Interacts with IFIH1. Interacts with DDX3X; the interaction may be induced upon virus infection. Interacts with TRIM6 (via SPRY box). Interacts with unanchored K48-linked polyubiquitin chains; this leads to IKBKE activation. Interacts with TBK1. Interacts with FKBP5. Sumoylation by TOPORS upon DNA damage is required for protection of cells against DNA damage-induced cell death. Desumoylated by SENP1. Post-translationally, autophosphorylated and phosphorylated by IKBKB/IKKB. Phosphorylation at Ser-172 is enhanced by the interaction with DDX3X. Phosphorylated at Thr-503 upon IFN activation. In terms of processing, 'Lys-63'-linked polyubiquitinated at Lys-30 and Lys-403 by TRAF2:BIRC2 and TRAF2:BIRC3 complexes. Ubiquitination is induced by LPS, TNFA and interleukin-1 and required for full kinase activity and KF-kappa-B pathway activation. As to expression, expressed in bone marrow-derived macrophages and at low levels in liver and white adipose tissue (at protein level). Detected in muscle and lung.

The protein localises to the cytoplasm. It localises to the nucleus. It is found in the PML body. It catalyses the reaction L-seryl-[I-kappa-B protein] + ATP = O-phospho-L-seryl-[I-kappa-B protein] + ADP + H(+). With respect to regulation, kinase activity is inhibited competitively by amlexanox. In terms of biological role, serine/threonine kinase that plays an essential role in regulating inflammatory responses to viral infection, through the activation of the type I IFN, NF-kappa-B and STAT signaling. Also involved in TNFA and inflammatory cytokines, like Interleukin-1, signaling. Following activation of viral RNA sensors, such as RIG-I-like receptors, associates with DDX3X and phosphorylates interferon regulatory factors (IRFs), IRF3 and IRF7, as well as DDX3X. This activity allows subsequent homodimerization and nuclear translocation of the IRF3 leading to transcriptional activation of pro-inflammatory and antiviral genes including IFNB. In order to establish such an antiviral state, IKBKE forms several different complexes whose composition depends on the type of cell and cellular stimuli. Thus, several scaffolding molecules including IPS1/MAVS, TANK, AZI2/NAP1 or TBKBP1/SINTBAD can be recruited to the IKBKE-containing-complexes. Activated by polyubiquitination in response to TNFA and interleukin-1, regulates the NF-kappa-B signaling pathway through, at least, the phosphorylation of CYLD. Phosphorylates inhibitors of NF-kappa-B thus leading to the dissociation of the inhibitor/NF-kappa-B complex and ultimately the degradation of the inhibitor. In addition, is also required for the induction of a subset of ISGs which displays antiviral activity, may be through the phosphorylation of STAT1 at 'Ser-708'. Phosphorylation of STAT1 at 'Ser-708' also seems to promote the assembly and DNA binding of ISGF3 (STAT1:STAT2:IRF9) complexes compared to GAF (STAT1:STAT1) complexes, in this way regulating the balance between type I and type II IFN responses. Protects cells against DNA damage-induced cell death. Also plays an important role in energy balance regulation by sustaining a state of chronic, low-grade inflammation in obesity, wich leads to a negative impact on insulin sensitivity. Phosphorylates AKT1. This Mus musculus (Mouse) protein is Inhibitor of nuclear factor kappa-B kinase subunit epsilon (Ikbke).